A 241-amino-acid polypeptide reads, in one-letter code: Ribosomal RNA small subunit methyltransferase G (241 aa).

Residues Gly79, Phe84, 130 to 131 (AE), and Arg150 contribute to the S-adenosyl-L-methionine site.

It belongs to the methyltransferase superfamily. RNA methyltransferase RsmG family.

It is found in the cytoplasm. Specifically methylates the N7 position of a guanine in 16S rRNA. This is Ribosomal RNA small subunit methyltransferase G from Ligilactobacillus salivarius (strain UCC118) (Lactobacillus salivarius).